We begin with the raw amino-acid sequence, 269 residues long: Sulfur carrier protein FdhD (269 aa).

C111 serves as the catalytic Cysteine persulfide intermediate.

The protein belongs to the FdhD family.

It localises to the cytoplasm. Its function is as follows. Required for formate dehydrogenase (FDH) activity. Acts as a sulfur carrier protein that transfers sulfur from IscS to the molybdenum cofactor prior to its insertion into FDH. The sequence is that of Sulfur carrier protein FdhD from Brucella abortus biovar 1 (strain 9-941).